We begin with the raw amino-acid sequence, 125 residues long: Large ribosomal subunit protein bL19 (125 aa).

This sequence belongs to the bacterial ribosomal protein bL19 family.

This protein is located at the 30S-50S ribosomal subunit interface and may play a role in the structure and function of the aminoacyl-tRNA binding site. The protein is Large ribosomal subunit protein bL19 of Synechococcus sp. (strain JA-2-3B'a(2-13)) (Cyanobacteria bacterium Yellowstone B-Prime).